A 485-amino-acid chain; its full sequence is MAAAAGRRMGPSWWGFSPALDLQVHCLQGTIQHLTSSDGLPELNILLVGGGDGRHLLKTICQASRWPHRKLKFFIIESDLELLARHMLFLSLALEHPEQMGLQEKSELFLELFGNSLIRSKTANYLQEKSELFIQCVTDPDYQQCVMPFLNLSSIKFKERDELEDIFKFWRIADPKLFPIDKYWDGKNRRHLGTRYDSRKGAYDWDLSMKLHDRGAGVINSREYNYWREKGVAFMNREGVYDVPNKTLASQMVVPQSSGKVLTRGYWGDITTSPYVAFGIETEEKSLLETANGVHVKSAQEIALHNIISLFHELATGKVYSVPASGQAEAELVKPVGDYKTNGDQTAAETIEEKAEAEDTKQSKYKGFITLNNVEIHFLPLSWVNELHCKGRFTNFFNLLYFSSSMVHLLKPEYKVIAASKATLVLELTKFMVDLQADKVQSYVSIVTKLAQGAGFTSDEPIDWKTHYIARFERGDDSVELQTAQ.

It belongs to the DNAAF3 family.

Its subcellular location is the cytoplasm. It is found in the dynein axonemal particle. Required for the assembly of axonemal inner and outer dynein arms. Involved in preassembly of dyneins into complexes before their transport into cilia. The polypeptide is Dynein axonemal assembly factor 3 (dnaaf3) (Xenopus laevis (African clawed frog)).